Here is a 67-residue protein sequence, read N- to C-terminus: Bombesin (67 aa).

The N-terminal stretch at 1–30 (MSLLPAVKVLPLGYLGIVLVFSLILRSAMV) is a signal peptide. A propeptide spanning residues 31–49 (DFIQDAGKLERIDTYKREA) is cleaved from the precursor. Q50 carries the pyrrolidone carboxylic acid modification. The residue at position 64 (M64) is a Methionine amide.

Belongs to the bombesin/neuromedin-B/ranatensin family. In terms of tissue distribution, expressed by the skin dorsal glands.

The protein localises to the secreted. Its function is as follows. Stimulates smooth muscle contraction in isolated rat stomach strip. The sequence is that of Bombesin from Sanguirana varians (Palawan frog).